The primary structure comprises 439 residues: Forkhead box protein J1-B (439 aa).

Positions 124–218 (KPPYSYATLI…MNGAMKKRRL (95 aa)) form a DNA-binding region, fork-head.

The protein belongs to the FOXJ1 family.

The protein resides in the nucleus. Key transcription factor required for motile ciliogenesis. Activates genes essential for motile cilia formation and function. In Xenopus laevis (African clawed frog), this protein is Forkhead box protein J1-B (foxj1-b).